A 318-amino-acid polypeptide reads, in one-letter code: Deoxyhypusine hydroxylase (318 aa).

2 HEAT-like PBS-type repeats span residues 70 to 96 and 103 to 129; these read LKHE…VLEN and VRHE…YFKE. Fe cation contacts are provided by His72, Glu73, His105, Glu106, His231, Glu232, His264, and Glu265. The HEAT-like PBS-type 3 repeat unit spans residues 262–288; sequence VRHEAAEALGSIATDECLPVLQSFLND.

This sequence belongs to the deoxyhypusine hydroxylase family. Fe(2+) serves as cofactor.

The protein localises to the cytoplasm. It is found in the nucleus. The enzyme catalyses [eIF5A protein]-deoxyhypusine + AH2 + O2 = [eIF5A protein]-hypusine + A + H2O. It functions in the pathway protein modification; eIF5A hypusination. In terms of biological role, catalyzes the hydroxylation of the N(6)-(4-aminobutyl)-L-lysine intermediate to form hypusine, an essential post-translational modification only found in mature eIF-5A factor. This chain is Deoxyhypusine hydroxylase, found in Candida albicans (strain SC5314 / ATCC MYA-2876) (Yeast).